The following is a 205-amino-acid chain: Protein-L-isoaspartate O-methyltransferase (205 aa).

Ser-56 is a catalytic residue.

Belongs to the methyltransferase superfamily. L-isoaspartyl/D-aspartyl protein methyltransferase family.

The protein localises to the cytoplasm. It carries out the reaction [protein]-L-isoaspartate + S-adenosyl-L-methionine = [protein]-L-isoaspartate alpha-methyl ester + S-adenosyl-L-homocysteine. In terms of biological role, catalyzes the methyl esterification of L-isoaspartyl residues in peptides and proteins that result from spontaneous decomposition of normal L-aspartyl and L-asparaginyl residues. It plays a role in the repair and/or degradation of damaged proteins. The protein is Protein-L-isoaspartate O-methyltransferase of Aeromonas hydrophila subsp. hydrophila (strain ATCC 7966 / DSM 30187 / BCRC 13018 / CCUG 14551 / JCM 1027 / KCTC 2358 / NCIMB 9240 / NCTC 8049).